Here is a 238-residue protein sequence, read N- to C-terminus: Isoprene-epoxide--glutathione S-transferase (238 aa).

Residues 7 to 82 form the GST N-terminal domain; sequence YVPAWGIPDI…YLKNKFGDKL (76 aa). The 121-residue stretch at 118–238 folds into the GST C-terminal domain; it reads DAGWETYIPF…LERIRKQYDI (121 aa).

Belongs to the GST superfamily. In terms of assembly, homodimer.

It carries out the reaction 2-glutathionyl-2-methylbut-3-en-1-ol = (3R)-3,4-epoxy-3-methylbut-1-ene + glutathione. Its activity is regulated as follows. Activity is inhibited by 1,2-epoxyhexane. Its function is as follows. Involved in isoprene degradation. Catalyzes the glutathione-dependent ring opening of various epoxides. The highest conversion rate is observed with the physiological substrate, 3,4-epoxy-3-methyl-1-butene, which is the primary oxidation product of isoprene. It can also use other epoxides, including epoxyethane, epoxypropane, epithiopropane, epichlorohydrin, epifluorohydrin, epibromohydrin, 1,2-epoxybutane, 1,2-epoxyhexane, cis-2,3-epoxybutane, cis-1,2-dichloroepoxyethane and trans-1,2-dichloroepoxyethane. This Rhodococcus sp. (strain AD45) protein is Isoprene-epoxide--glutathione S-transferase.